A 284-amino-acid chain; its full sequence is Bifunctional protein FolD 1 (284 aa).

NADP(+) contacts are provided by residues 166-168 (GAS) and Ile232.

It belongs to the tetrahydrofolate dehydrogenase/cyclohydrolase family. As to quaternary structure, homodimer.

It catalyses the reaction (6R)-5,10-methylene-5,6,7,8-tetrahydrofolate + NADP(+) = (6R)-5,10-methenyltetrahydrofolate + NADPH. The enzyme catalyses (6R)-5,10-methenyltetrahydrofolate + H2O = (6R)-10-formyltetrahydrofolate + H(+). Its pathway is one-carbon metabolism; tetrahydrofolate interconversion. Functionally, catalyzes the oxidation of 5,10-methylenetetrahydrofolate to 5,10-methenyltetrahydrofolate and then the hydrolysis of 5,10-methenyltetrahydrofolate to 10-formyltetrahydrofolate. The chain is Bifunctional protein FolD 1 from Pseudomonas syringae pv. syringae (strain B728a).